The sequence spans 156 residues: 6,7-dimethyl-8-ribityllumazine synthase (156 aa).

5-amino-6-(D-ribitylamino)uracil contacts are provided by residues F25, 59-61 (AFE), and 83-85 (AVI). 88 to 89 (GT) lines the (2S)-2-hydroxy-3-oxobutyl phosphate pocket. Catalysis depends on H91, which acts as the Proton donor. Residue F116 coordinates 5-amino-6-(D-ribitylamino)uracil. R130 contacts (2S)-2-hydroxy-3-oxobutyl phosphate.

Belongs to the DMRL synthase family.

The catalysed reaction is (2S)-2-hydroxy-3-oxobutyl phosphate + 5-amino-6-(D-ribitylamino)uracil = 6,7-dimethyl-8-(1-D-ribityl)lumazine + phosphate + 2 H2O + H(+). It participates in cofactor biosynthesis; riboflavin biosynthesis; riboflavin from 2-hydroxy-3-oxobutyl phosphate and 5-amino-6-(D-ribitylamino)uracil: step 1/2. Functionally, catalyzes the formation of 6,7-dimethyl-8-ribityllumazine by condensation of 5-amino-6-(D-ribitylamino)uracil with 3,4-dihydroxy-2-butanone 4-phosphate. This is the penultimate step in the biosynthesis of riboflavin. The polypeptide is 6,7-dimethyl-8-ribityllumazine synthase (Desulfovibrio desulfuricans (strain ATCC 27774 / DSM 6949 / MB)).